Consider the following 212-residue polypeptide: Transcription antitermination protein NusB (212 aa).

Disordered regions lie at residues 1 to 34 and 169 to 212; these read MSDEQSTPASGRPPRQSRGGLTSTGARKAASKSN and EHDR…QAAG. Positions 178 to 212 are enriched in low complexity; that stretch reads APAQPAAKADTATDAVADAATDAAAADDAADQAAG.

This sequence belongs to the NusB family.

Functionally, involved in transcription antitermination. Required for transcription of ribosomal RNA (rRNA) genes. Binds specifically to the boxA antiterminator sequence of the ribosomal RNA (rrn) operons. This is Transcription antitermination protein NusB from Delftia acidovorans (strain DSM 14801 / SPH-1).